The following is a 154-amino-acid chain: Nucleoside diphosphate kinase A1 (154 aa).

K13, F61, R89, T95, R106, and N116 together coordinate ATP. The active-site Pros-phosphohistidine intermediate is H119.

Belongs to the NDK family. Mg(2+) is required as a cofactor.

It is found in the cytoplasm. The enzyme catalyses a 2'-deoxyribonucleoside 5'-diphosphate + ATP = a 2'-deoxyribonucleoside 5'-triphosphate + ADP. It carries out the reaction a ribonucleoside 5'-diphosphate + ATP = a ribonucleoside 5'-triphosphate + ADP. Major role in the synthesis of nucleoside triphosphates other than ATP. The ATP gamma phosphate is transferred to the NDP beta phosphate via a ping-pong mechanism, using a phosphorylated active-site intermediate. This is Nucleoside diphosphate kinase A1 from Xenopus laevis (African clawed frog).